Consider the following 102-residue polypeptide: MADFTLSKSLFSGKYRNASSTPGNIAYALFVLFCFWAGAQLLNLLVHAPGVYERLMQVQETGRPRVEIGLGVGTIFGLIPFLVGCLIFAVVALWLHWRHRRQ.

The Cytoplasmic segment spans residues 1-24; sequence MADFTLSKSLFSGKYRNASSTPGN. The helical transmembrane segment at 25–45 threads the bilayer; it reads IAYALFVLFCFWAGAQLLNLL. Residues 46 to 74 lie on the Periplasmic side of the membrane; the sequence is VHAPGVYERLMQVQETGRPRVEIGLGVGT. A helical membrane pass occupies residues 75–95; that stretch reads IFGLIPFLVGCLIFAVVALWL. Residues 96–102 lie on the Cytoplasmic side of the membrane; that stretch reads HWRHRRQ.

The protein resides in the cell inner membrane. This is Inner membrane protein YaiY (yaiY) from Escherichia coli O157:H7.